We begin with the raw amino-acid sequence, 266 residues long: 15-hydroxyprostaglandin dehydrogenase [NAD(+)] (266 aa).

NAD(+)-binding positions include 12 to 20 (GAAQGIGRA), 36 to 37 (DW), 63 to 65 (CDV), and asparagine 91. Residues serine 138 and glutamine 148 each coordinate substrate. The active-site Proton acceptor is the tyrosine 151. NAD(+) is bound by residues 151–155 (YCASK) and 186–188 (VNT).

This sequence belongs to the short-chain dehydrogenases/reductases (SDR) family. As to quaternary structure, homodimer.

It is found in the cytoplasm. It carries out the reaction prostaglandin E2 + NAD(+) = 15-oxoprostaglandin E2 + NADH + H(+). The enzyme catalyses (15S)-hydroxy-(5Z,8Z,11Z,13E)-eicosatetraenoate + NAD(+) = 15-oxo-(5Z,8Z,11Z,13E)-eicosatetraenoate + NADH + H(+). The catalysed reaction is (11R)-hydroxy-(5Z,8Z,12E,14Z)-eicosatetraenoate + NAD(+) = 11-oxo-(5Z,8Z,12E,14Z)-eicosatetraenoate + NADH + H(+). It catalyses the reaction lipoxin A4 + NAD(+) = 15-oxo-(5S,6R)-dihydroxy-(7E,9E,11Z,13E)-eicosatetraenoate + NADH + H(+). It carries out the reaction 15-oxo-(5S,6R)-dihydroxy-(7E,9E,11Z)-eicosatrienoate + NADH + H(+) = (5S,6R,15S)-trihydroxy-(7E,9E,11Z)-eicosatrienoate + NAD(+). The enzyme catalyses prostaglandin A1 + NAD(+) = 15-oxo-prostaglandin A1 + NADH + H(+). The catalysed reaction is prostaglandin E1 + NAD(+) = 15-oxoprostaglandin E1 + NADH + H(+). It catalyses the reaction 14-hydroxy-(4Z,7Z,10Z,12E,16Z,19Z)-docosahexaenoate + NAD(+) = 14-oxo-(4Z,7Z,10Z,12E,16Z,19Z)-docosahexaenoate + NADH + H(+). It carries out the reaction resolvin E1 + NAD(+) = 18-oxo-resolvin E1 + NADH + H(+). The enzyme catalyses resolvin D1 + NAD(+) = 8-oxoresolvin D1 + NADH + H(+). The catalysed reaction is resolvin D1 + NAD(+) = 17-oxoresolvin D1 + NADH + H(+). It catalyses the reaction resolvin D2 + NAD(+) = 7-oxoresolvin D2 + NADH + H(+). It carries out the reaction resolvin D2 + NAD(+) = 16-oxoresolvin D2 + NADH + H(+). In terms of biological role, catalyzes the NAD-dependent dehydrogenation (oxidation) of a broad array of hydroxylated polyunsaturated fatty acids (mainly eicosanoids and docosanoids, including prostaglandins, lipoxins and resolvins), yielding their corresponding keto (oxo) metabolites. Decreases the levels of the pro-proliferative prostaglandins such as prostaglandin E2 (whose activity is increased in cancer because of an increase in the expression of cyclooxygenase 2) and generates oxo-fatty acid products that can profoundly influence cell function by abrogating pro-inflammatory cytokine expression. Converts resolvins E1, D1 and D2 to their oxo products, which represents a mode of resolvin inactivation. Resolvin E1 plays important roles during the resolution phase of acute inflammation, while resolvins D1 and D2 have a unique role in obesity-induced adipose inflammation. This is 15-hydroxyprostaglandin dehydrogenase [NAD(+)] (HPGD) from Macaca fascicularis (Crab-eating macaque).